Reading from the N-terminus, the 200-residue chain is 3-isopropylmalate dehydratase small subunit (200 aa).

It belongs to the LeuD family. LeuD type 1 subfamily. As to quaternary structure, heterodimer of LeuC and LeuD.

It catalyses the reaction (2R,3S)-3-isopropylmalate = (2S)-2-isopropylmalate. It participates in amino-acid biosynthesis; L-leucine biosynthesis; L-leucine from 3-methyl-2-oxobutanoate: step 2/4. Its function is as follows. Catalyzes the isomerization between 2-isopropylmalate and 3-isopropylmalate, via the formation of 2-isopropylmaleate. The sequence is that of 3-isopropylmalate dehydratase small subunit from Sodalis glossinidius (strain morsitans).